The sequence spans 353 residues: Protein disulfide isomerase CRELD2 (353 aa).

The first 24 residues, methionine 1–alanine 24, serve as a signal peptide directing secretion. The CXXC signature appears at cysteine 31–cysteine 34. Cystine bridges form between cysteine 31-cysteine 34, cysteine 140-cysteine 154, cysteine 148-cysteine 166, and cysteine 168-cysteine 177. The EGF-like 1 domain maps to aspartate 136–threonine 178. An FU 1 repeat occupies histidine 193 to proline 240. N-linked (GlcNAc...) asparagine glycosylation occurs at asparagine 251. The FU 2 repeat unit spans residues serine 253–valine 302. A CXXC motif is present at residues cysteine 263–cysteine 266. 4 cysteine pairs are disulfide-bonded: cysteine 263–cysteine 266, cysteine 294–cysteine 308, cysteine 301–cysteine 317, and cysteine 319–cysteine 330. In terms of domain architecture, EGF-like 2; calcium-binding spans aspartate 290–valine 331. Positions proline 332–leucine 353 are disordered. Over residues glutamate 342–leucine 353 the composition is skewed to polar residues.

The protein belongs to the CRELD family. As to quaternary structure, interacts with CHRNA4. Component of a complex containing at least CRELD2, MANF, MATN3 and PDIA4. As to expression, ubiquitously expressed. Highly expressed in skeletal muscle, heart, liver, kidney and placenta.

The protein localises to the endoplasmic reticulum. The enzyme catalyses Catalyzes the rearrangement of -S-S- bonds in proteins.. In terms of biological role, protein disulfide isomerase. Might play a role in the unfolded protein response. May regulate transport of alpha4-beta2 neuronal acetylcholine receptor. The sequence is that of Protein disulfide isomerase CRELD2 (CRELD2) from Homo sapiens (Human).